Reading from the N-terminus, the 446-residue chain is MSRRNAGAMQREGSVKDWEEFDPSPSPKLAYSQSYVAMRGLLTSVASLDLVLMSSSLKSAWAAISSHKHARSLERSRSKGMSLKRAMLQLLVCFMVGIFIGFTPPFSVDLPGKIASENGRLPFDGDAIDRRQMVERQGTKLEPFVAEAESEASSEPQVEEGPPVPAMLDDEADFVEASPIVHSVNDSGIVVRKHLIIITTTSVRPHQAYYLNRLAHVLKDVPPPLLWIVAEWPYQSRETAEILRSSGIMYRHLICNRNTTNIRKIVVCQKNNAIFHIKKHRLDGIVHFADEERAYSADLFEEMRKIRRFGTWPVAIHVGTKYRVVLEGPVCKGNQVTGWHTNQRRGVSRRFPIGFSGFAFNSTILWDPQRWNSPTLESIIVHSGGRGGLQESRFIEKLVEDESQMEGLGDNCTRVMVWNFELEPPQVNYPIGWLLQRNLDAVVPIT.

The segment at 1–26 (MSRRNAGAMQREGSVKDWEEFDPSPS) is disordered. Residues 1–85 (MSRRNAGAMQ…SRSKGMSLKR (85 aa)) are Cytoplasmic-facing. A helical; Signal-anchor for type II membrane protein transmembrane segment spans residues 86–106 (AMLQLLVCFMVGIFIGFTPPF). The Lumenal segment spans residues 107 to 446 (SVDLPGKIAS…RNLDAVVPIT (340 aa)). N185, N258, N361, and N411 each carry an N-linked (GlcNAc...) asparagine glycan.

The protein belongs to the glycosyltransferase 43 family.

It localises to the golgi apparatus membrane. Probable beta-1,4-xylosyltransferase involved in xylan biosynthesis in cell walls. This Oryza sativa subsp. japonica (Rice) protein is Probable beta-1,4-xylosyltransferase IRX9L.